Here is a 309-residue protein sequence, read N- to C-terminus: Taste receptor type 2 member 46 (309 aa).

Met-1 is a topological domain (extracellular). Residues 2–22 (ITFLPIIFSILIVVTFVIGNF) form a helical membrane-spanning segment. Residues 23–46 (ANGFIALVNSIEWFKRQKISFADQ) lie on the Cytoplasmic side of the membrane. The helical transmembrane segment at 47-67 (ILTALAVSRVGLLWVLVLNWY) threads the bilayer. Residues 68–86 (ATELNPAFNSIEVRITAYN) are Extracellular-facing. Residues 87 to 107 (VWAVINHFSNWLATSLSIFYL) form a helical membrane-spanning segment. At 108 to 126 (LKIANFSNLIFLHLKRRVK) the chain is on the cytoplasmic side. The helical transmembrane segment at 127 to 147 (SVVLVILLGPLLFLVCHLFVI) threads the bilayer. Over 148–178 (NMNQIIWTKEYEGNMTWKIKLRSAMYLSNTT) the chain is Extracellular. Residues Asn-161 and Asn-176 are each glycosylated (N-linked (GlcNAc...) asparagine). The helical transmembrane segment at 179-199 (VTILANLVPFTLTLISFLLLI) threads the bilayer. Topologically, residues 200 to 229 (CSLCKHLKKMQLHGKGSQDPSMKVHIKALQ) are cytoplasmic. A helical transmembrane segment spans residues 230–250 (TVTSFLLLCAIYFLSIIMSVW). The Extracellular segment spans residues 251–259 (SFESLENKP). A helical membrane pass occupies residues 260 to 280 (VFMFCEAIAFSYPSTHPFILI). Residues 281-309 (WGNKKLKQTFLSVLWHVRYWVKGEKPSSS) lie on the Cytoplasmic side of the membrane.

This sequence belongs to the G-protein coupled receptor T2R family. In terms of tissue distribution, expressed in subsets of taste receptor cells of the tongue and exclusively in gustducin-positive cells. Expressed on ciliated airway epithelium.

It is found in the membrane. It localises to the cell projection. Its subcellular location is the cilium membrane. Its function is as follows. Receptor that may play a role in the perception of bitterness and is gustducin-linked. May play a role in sensing the chemical composition of the gastrointestinal content. The activity of this receptor may stimulate alpha gustducin, mediate PLC-beta-2 activation and lead to the gating of TRPM5. In airway epithelial cells, binding of bitter compounds increases the intracellular calcium ion concentration and stimulates ciliary beat frequency. The chain is Taste receptor type 2 member 46 (TAS2R46) from Homo sapiens (Human).